We begin with the raw amino-acid sequence, 343 residues long: Multidrug resistance protein MdtN (343 aa).

The Cytoplasmic segment spans residues 1-12 (MESTPKKAPRSK). The chain crosses the membrane as a helical; Signal-anchor for type II membrane protein span at residues 13-33 (FPALLVVALALVALVFVIWRV). The Periplasmic portion of the chain corresponds to 34–343 (DSAPSTNDAY…ASAVANLEPQ (310 aa)).

It belongs to the membrane fusion protein (MFP) (TC 8.A.1) family. Could be part of a tripartite efflux system composed of MdtN, MdtO and MdtP.

Its subcellular location is the cell inner membrane. Its function is as follows. Could be involved in resistance to puromycin, acriflavine and tetraphenylarsonium chloride. The chain is Multidrug resistance protein MdtN (mdtN) from Escherichia coli (strain K12).